A 433-amino-acid chain; its full sequence is Adenylyltransferase and sulfurtransferase UBA4 (433 aa).

ATP-binding positions include glycine 70, aspartate 91, 98–102 (SNLHR), lysine 115, and 159–160 (DT). Positions 201 and 204 each coordinate Zn(2+). Cysteine 218 acts as the Glycyl thioester intermediate; for adenylyltransferase activity in catalysis. Zn(2+)-binding residues include cysteine 279 and cysteine 282. Positions 332–431 (SGNNKVLLDV…YIDDVDQSIP (100 aa)) constitute a Rhodanese domain. Cysteine 390 serves as the catalytic Cysteine persulfide intermediate; for sulfurtransferase activity.

In the N-terminal section; belongs to the HesA/MoeB/ThiF family. UBA4 subfamily. Zn(2+) is required as a cofactor.

It is found in the cytoplasm. It localises to the cytosol. The protein operates within tRNA modification; 5-methoxycarbonylmethyl-2-thiouridine-tRNA biosynthesis. Functionally, plays a central role in 2-thiolation of mcm(5)S(2)U at tRNA wobble positions of cytosolic tRNA(Lys), tRNA(Glu) and tRNA(Gln). Acts by mediating the C-terminal thiocarboxylation of sulfur carrier URM1. Its N-terminus first activates URM1 as acyl-adenylate (-COAMP), then the persulfide sulfur on the catalytic cysteine is transferred to URM1 to form thiocarboxylation (-COSH) of its C-terminus. The reaction probably involves hydrogen sulfide that is generated from the persulfide intermediate and that acts as a nucleophile towards URM1. Subsequently, a transient disulfide bond is formed. Does not use thiosulfate as sulfur donor; NFS1 probably acting as a sulfur donor for thiocarboxylation reactions. Prior mcm(5) tRNA modification by the elongator complex is required for 2-thiolation. May also be involved in protein urmylation. The sequence is that of Adenylyltransferase and sulfurtransferase UBA4 from Candida glabrata (strain ATCC 2001 / BCRC 20586 / JCM 3761 / NBRC 0622 / NRRL Y-65 / CBS 138) (Yeast).